The following is an 892-amino-acid chain: Smad protein daf-3 (892 aa).

Disordered stretches follow at residues 1 to 43 (MGDH…GLED) and 135 to 161 (PYLD…FDTK). A compositionally biased stretch (polar residues) spans 15-26 (IPPQFNYSQPGT). One can recognise an MH1 domain in the interval 198–347 (KIVEYLMYYR…YEIVIGTMIV (150 aa)). The interval 505-552 (YPDFHHPFNQQPHQPPQLSQNHTSQQGSHQPGHQGQVPNDPPISRPVL) is disordered. A compositionally biased stretch (low complexity) spans 528-540 (SQQGSHQPGHQGQ). Residues 657 to 880 (WGTIVYYEKN…TNCFEPLGME (224 aa)) form the MH2 domain.

The protein belongs to the dwarfin/SMAD family. In terms of assembly, interacts with R-SMADs daf-8 and daf-14. Interacts with daf-14 in a daf-8 dependent manner. May interact with daf-5.

The protein localises to the cytoplasm. Its subcellular location is the nucleus. It localises to the chromosome. In terms of biological role, transcriptional regulator and common SMAD (co-SMAD), required to regulate entry into a developmentally arrested larval state known as dauer, in response to harsh environmental conditions. Probable component of transcriptional regulatory complex with SMAD protein daf-5. Acts antagonistically to SMAD signaling downstream of TGF-beta-like daf-7 signaling. Binds to the 5'-GTCTG-3' motif found in regulatory regions and may modulate the expression of genes involved in TGF-beta-like daf-7 and Notch lag-2 signaling. May regulate gene expression outside the dauer pathway. The polypeptide is Smad protein daf-3 (Caenorhabditis elegans).